A 382-amino-acid polypeptide reads, in one-letter code: Probable G-protein coupled receptor 132 (382 aa).

The Extracellular portion of the chain corresponds to 1-42 (MRSEPTNAAGNTTLGVTSVLQSTSVPSSETCHVSYEESRVVL). Residue asparagine 11 is glycosylated (N-linked (GlcNAc...) asparagine). Residues 43-65 (VVVYSAVCLLGLPANCLTAWLTL) form a helical membrane-spanning segment. Residues 66 to 76 (LQVLQRNVLAV) are Cytoplasmic-facing. A helical membrane pass occupies residues 77–99 (YLFCLSLCELLYISTVPLWIIYI). At 100 to 113 (QNQHKWNLGPQACK) the chain is on the extracellular side. Cysteine 112 and cysteine 184 are oxidised to a cystine. A helical transmembrane segment spans residues 114-135 (VTAYIFFCNIYISILLLCCISC). The Cytoplasmic portion of the chain corresponds to 136–155 (DRYMAVVYALESRGHRHQRT). A helical transmembrane segment spans residues 156–175 (AVTISACVILLVGLVNYPVF). Residues 176-198 (DMKVEKSFCFEPLRMNSKIAGYH) are Extracellular-facing. The chain crosses the membrane as a helical span at residues 199–221 (YLRFTFGFAIPLGILAFTNHQIF). Over 222–241 (RSIKLSDSLSAAQKNKVKRS) the chain is Cytoplasmic. The chain crosses the membrane as a helical span at residues 242–261 (AIAVVTIFLVCFAPYHVVLL). The Extracellular segment spans residues 262-286 (VKAASFSFYQGDMDAVCAFESRLYT). The chain crosses the membrane as a helical span at residues 287-309 (VSMVFLCLSTVNSVADPIIYVLG). The Cytoplasmic portion of the chain corresponds to 310-382 (TDHSRQEVSR…SPERLPEELC (73 aa)).

It belongs to the G-protein coupled receptor 1 family. Highly expressed in hematopoietic tissues rich in lymphocytes like spleen and thymus. Weakly expressed in heart and lung. Highly expressed in infiltrating macrophages within atherosclerotic lesions.

The protein resides in the cell membrane. Functionally, may be a receptor for oxidized free fatty acids derived from linoleic and arachidonic acids such as 9-hydroxyoctadecadienoic acid (9-HODE). Activates a G alpha protein, most likely G alpha(q). May be involved in apoptosis. Functions at the G2/M checkpoint to delay mitosis. May function as a sensor that monitors the oxidative states and mediates appropriate cellular responses such as secretion of paracrine signals and attenuation of proliferation. May mediate ths accumulation of intracellular inositol phosphates at acidic pH through proton-sensing activity. This Mus musculus (Mouse) protein is Probable G-protein coupled receptor 132 (Gpr132).